The primary structure comprises 251 residues: Pyrroloquinoline-quinone synthase (251 aa).

It belongs to the PqqC family.

It carries out the reaction 6-(2-amino-2-carboxyethyl)-7,8-dioxo-1,2,3,4,7,8-hexahydroquinoline-2,4-dicarboxylate + 3 O2 = pyrroloquinoline quinone + 2 H2O2 + 2 H2O + H(+). It functions in the pathway cofactor biosynthesis; pyrroloquinoline quinone biosynthesis. Its function is as follows. Ring cyclization and eight-electron oxidation of 3a-(2-amino-2-carboxyethyl)-4,5-dioxo-4,5,6,7,8,9-hexahydroquinoline-7,9-dicarboxylic-acid to PQQ. The sequence is that of Pyrroloquinoline-quinone synthase from Pseudomonas syringae pv. syringae (strain B728a).